Consider the following 249-residue polypeptide: MFQVAGLIVFCGLLAQTTALLEALPLGKALPLALDQSPTDLVGSLTSTLSNGLLSEGVLGILGNLPLLDILKAGGNTPSGLLGGLLGKLSSTIPLLNDIVDLQITDPQLLELGLVQSPDGHRLYVTIPLSLVLNVKTSVVGSLLKLAVKLNITVELLAVKDEQGKSHLVLGDCTHSPGSLKISLLDGLGPLVPQDLLDSITGVLDNVLPGLVQGEVCPLVNEVLSHLDVTLVHSIVDALIQGQEFVIKV.

Residues 1-15 (MFQVAGLIVFCGLLA) form the signal peptide. An important for surfactant activity and antibacterial properties region spans residues 81–86 (LLGGLL). An N-linked (GlcNAc...) asparagine glycan is attached at N151. The cysteines at positions 173 and 217 are disulfide-linked.

It belongs to the BPI/LBP/Plunc superfamily. Plunc family. In terms of assembly, monomer. Interacts (via N-terminus) with SCNN1B, a subunit of the heterotrimeric epithelial sodium channel (ENaC); this inhibits proteolytic activation of ENaC. In terms of tissue distribution, expressed in lung and trachea.

Its subcellular location is the secreted. Lipid-binding protein which shows high specificity for the surfactant phospholipid dipalmitoylphosphatidylcholine (DPPC). Plays a role in the innate immune responses of the upper airways. Reduces the surface tension in secretions from airway epithelia and inhibits the formation of biofilm by pathogenic Gram-negative bacteria, such as P.aeruginosa and K.pneumoniae. Negatively regulates proteolytic cleavage of SCNN1G, an event that is required for activation of the epithelial sodium channel (ENaC), and thereby contributes to airway surface liquid homeostasis and proper clearance of mucus. Plays a role in the airway inflammatory response after exposure to irritants. May attract macrophages and neutrophils. The polypeptide is BPI fold-containing family A member 1 (BPIFA1) (Sus scrofa (Pig)).